A 217-amino-acid chain; its full sequence is Large ribosomal subunit protein uL3 (217 aa).

It belongs to the universal ribosomal protein uL3 family. As to quaternary structure, part of the 50S ribosomal subunit. Forms a cluster with proteins L14 and L19.

In terms of biological role, one of the primary rRNA binding proteins, it binds directly near the 3'-end of the 23S rRNA, where it nucleates assembly of the 50S subunit. The protein is Large ribosomal subunit protein uL3 of Mycobacterium ulcerans (strain Agy99).